The primary structure comprises 598 residues: MDNKKIRNFAIIAHIDHGKSTLADRILEFTNTVSKRDLKEQHLDSMDLEKERGITIKLNAVQIRYNSYIFHLIDTPGHVDFTYEVSRSLAATEGALLLVDASQGIQAQTLANVYLALENNLEIIPIINKIDLPSANVDKVKAEIENTIGISAENAILISAKNGIGIEKVLEAIVNLIPPPQASDEKDPLKALVFDSYFDIYRGVIIFIRVVTGKISVGDTFKFMANNLKFSVIELGISSPNQVKKEALFAGEVGWVAASIRNAKDVEVGDTITLVENPAKSPLPGYKKLVPVMYTGFYPVDSQQYNLLKDSLEKISLSDSSIIYEPESSKALGFGFRIGFLGLLHMEILQERLEREFNLSIIATAPSVEFQITRTNGQVQIISNPSLFPEPNFISEIREPYILAKIFLPEEFLGQIMGLCQDKRGIYVDLEYIDDFRRRLIYKLPLVEVIFDFFDRLKSLSKGYASFEYEVIDYQVSKLQKLDILLNGQKIDALSMIVHKDFAYPKARDLTQKLKEIIPRHSFEVPVQAVIGSKVIARETIKAYRKDVTAKLYGGDVTRRKKLLEKQKAGKKRMKSFGVVDVPQEAFLAILKTNINEK.

The region spanning Lys-4–Gln-181 is the tr-type G domain. GTP is bound by residues Asp-16–Thr-21 and Asn-128–Asp-131.

This sequence belongs to the TRAFAC class translation factor GTPase superfamily. Classic translation factor GTPase family. LepA subfamily.

The protein resides in the cell membrane. It carries out the reaction GTP + H2O = GDP + phosphate + H(+). Functionally, required for accurate and efficient protein synthesis under certain stress conditions. May act as a fidelity factor of the translation reaction, by catalyzing a one-codon backward translocation of tRNAs on improperly translocated ribosomes. Back-translocation proceeds from a post-translocation (POST) complex to a pre-translocation (PRE) complex, thus giving elongation factor G a second chance to translocate the tRNAs correctly. Binds to ribosomes in a GTP-dependent manner. This Mesomycoplasma hyopneumoniae (strain 232) (Mycoplasma hyopneumoniae) protein is Elongation factor 4.